We begin with the raw amino-acid sequence, 297 residues long: Inosose dehydratase (297 aa).

The protein belongs to the IolE/MocC family. The cofactor is glutathione. It depends on Co(2+) as a cofactor. Mn(2+) is required as a cofactor.

It catalyses the reaction scyllo-inosose = 3D-3,5/4-trihydroxycyclohexane-1,2-dione + H2O. Its pathway is polyol metabolism; myo-inositol degradation into acetyl-CoA; acetyl-CoA from myo-inositol: step 2/7. Functionally, catalyzes the dehydration of inosose (2-keto-myo-inositol, 2KMI or 2,4,6/3,5-pentahydroxycyclohexanone) to 3D-(3,5/4)-trihydroxycyclohexane-1,2-dione (D-2,3-diketo-4-deoxy-epi-inositol). This chain is Inosose dehydratase, found in Clostridium perfringens (strain 13 / Type A).